We begin with the raw amino-acid sequence, 929 residues long: Valine--tRNA ligase (929 aa).

The 'HIGH' region signature appears at proline 59–histidine 69. A 'KMSKS' region motif is present at residues lysine 557 to serine 561. Lysine 560 contributes to the ATP binding site. Residues leucine 862 to glycine 929 are a coiled coil.

The protein belongs to the class-I aminoacyl-tRNA synthetase family. ValS type 1 subfamily. As to quaternary structure, monomer.

The protein resides in the cytoplasm. The enzyme catalyses tRNA(Val) + L-valine + ATP = L-valyl-tRNA(Val) + AMP + diphosphate. Its function is as follows. Catalyzes the attachment of valine to tRNA(Val). As ValRS can inadvertently accommodate and process structurally similar amino acids such as threonine, to avoid such errors, it has a 'posttransfer' editing activity that hydrolyzes mischarged Thr-tRNA(Val) in a tRNA-dependent manner. The sequence is that of Valine--tRNA ligase from Prochlorococcus marinus (strain MIT 9313).